The chain runs to 439 residues: MKKPLRWLAALTVLLLPLSALAQQQGLTIDIVGGSASATPIAVIPMPYQGSDTAPQTDVSAVVGADLDRSGQFRTLPAAQIVEKPTRGTEVQFQTWRTLKQNYIVVGRVMDAGEGAYRVEYELFDVAKGERMLGLAMTARANAMRDVSHQMADAIYEKITGVRGAFWTRIAYVTASGKGGAMRYALMVADSDGYNPQTIVRSAEPLLSPNWSPDGKKLAYVSFERGNSSIYLQDIATGARELVSSFRGINGAPSFSPDGRRLALALSRSGNPEIYVMDLGSKQLTQLTNHFGIDTEPTWAPDGGSIYFTSDRGGRPQIYQVAASGGSANRVTFQGNYNATASVSFDGKKIAVAQGSGNTYRIAMMDRSLGSPSWSTLSPGSLDESPSFAPNASMVLYAAREGGRGVLYAVSSDARVRQRLVLADGDVREPAWGPYRTAH.

The N-terminal stretch at 1–22 (MKKPLRWLAALTVLLLPLSALA) is a signal peptide.

This sequence belongs to the TolB family. As to quaternary structure, the Tol-Pal system is composed of five core proteins: the inner membrane proteins TolA, TolQ and TolR, the periplasmic protein TolB and the outer membrane protein Pal. They form a network linking the inner and outer membranes and the peptidoglycan layer.

Its subcellular location is the periplasm. In terms of biological role, part of the Tol-Pal system, which plays a role in outer membrane invagination during cell division and is important for maintaining outer membrane integrity. In Xanthomonas oryzae pv. oryzae (strain PXO99A), this protein is Tol-Pal system protein TolB.